The chain runs to 88 residues: Small ribosomal subunit protein bS20 (88 aa).

The segment at 1–22 is disordered; sequence MANTPSAKKAVNKIAKRTQVNK.

Belongs to the bacterial ribosomal protein bS20 family.

Functionally, binds directly to 16S ribosomal RNA. The protein is Small ribosomal subunit protein bS20 of Bartonella bacilliformis (strain ATCC 35685 / KC583 / Herrer 020/F12,63).